A 132-amino-acid chain; its full sequence is Small ribosomal subunit protein uS8 (132 aa).

Belongs to the universal ribosomal protein uS8 family. In terms of assembly, part of the 30S ribosomal subunit. Contacts proteins S5 and S12.

One of the primary rRNA binding proteins, it binds directly to 16S rRNA central domain where it helps coordinate assembly of the platform of the 30S subunit. In Caldicellulosiruptor bescii (strain ATCC BAA-1888 / DSM 6725 / KCTC 15123 / Z-1320) (Anaerocellum thermophilum), this protein is Small ribosomal subunit protein uS8.